The following is a 56-amino-acid chain: Prokaryotic ubiquitin-like protein UBact (56 aa).

A disordered region spans residues 1–56; it reads MPDQAQKTRPVGPGPSGGGEGPGSPKVEKPNTEELLKRMRKVDPDQAKRYRQRTGQ. Basic and acidic residues predominate over residues 26–48; sequence KVEKPNTEELLKRMRKVDPDQAK. Glutamine 56 is modified (deamidated glutamine). Glutamine 56 participates in a covalent cross-link: Isoglutamyl lysine isopeptide (Gln-Lys) (interchain with K-? in acceptor proteins).

It belongs to the ubiquitin-like protein UBact family. In terms of processing, may be modified by deamidation of its C-terminal glutamine to glutamate by the adjacently encoded deamidase. This could be a prerequisite to the subsequent conjugation, as shown in the other prokaryotic ubiquitin-like protein Pup.

Its function is as follows. May function as a protein modifier covalently attached to lysine residues of substrate proteins. This may serve to target the modified proteins for degradation by proteasomes. In Pedosphaera parvula (strain Ellin514), this protein is Prokaryotic ubiquitin-like protein UBact.